We begin with the raw amino-acid sequence, 327 residues long: tRNA N6-adenosine threonylcarbamoyltransferase (327 aa).

Fe cation-binding residues include histidine 109 and histidine 113. Substrate contacts are provided by residues 132 to 136 (MVSGG), aspartate 165, glycine 178, aspartate 182, and asparagine 268. Aspartate 296 is a binding site for Fe cation.

This sequence belongs to the KAE1 / TsaD family. As to quaternary structure, forms a hexamer composed of two TsaB, TsaD and TsaE trimers. Fe(2+) is required as a cofactor.

The protein resides in the cytoplasm. The enzyme catalyses L-threonylcarbamoyladenylate + adenosine(37) in tRNA = N(6)-L-threonylcarbamoyladenosine(37) in tRNA + AMP + H(+). Required for the formation of a threonylcarbamoyl group on adenosine at position 37 (t(6)A37) in tRNAs that read codons beginning with adenine. Is involved in the transfer of the threonylcarbamoyl moiety of threonylcarbamoyl-AMP (TC-AMP) to the N6 group of A37, together with TsaE and TsaB. TsaD likely plays a direct catalytic role in this reaction. This is tRNA N6-adenosine threonylcarbamoyltransferase from Thermotoga maritima (strain ATCC 43589 / DSM 3109 / JCM 10099 / NBRC 100826 / MSB8).